The sequence spans 218 residues: Glutathione S-transferase Mu 6 (218 aa).

Positions 1–88 (MPVTLGYWDI…YLGRKHNLCG (88 aa)) constitute a GST N-terminal domain. Glutathione is bound by residues 7-8 (YW), 46-50 (WLNDK), 59-60 (NL), and 72-73 (QS). In terms of domain architecture, GST C-terminal spans 90–208 (TEEERIRVDI…KTSRFLPSPV (119 aa)). Residue tyrosine 116 participates in substrate binding.

This sequence belongs to the GST superfamily. Mu family. Homodimer. Expressed in liver, stomach and small intestine. Not expressed in spleen, kidney, colon, heart, muscle, brain or lung.

The protein localises to the cytoplasm. It catalyses the reaction RX + glutathione = an S-substituted glutathione + a halide anion + H(+). Functionally, conjugation of reduced glutathione to a wide number of exogenous and endogenous hydrophobic electrophiles. This is Glutathione S-transferase Mu 6 (Gstm6) from Mus musculus (Mouse).